Consider the following 444-residue polypeptide: Phosphoglucosamine mutase (444 aa).

The active-site Phosphoserine intermediate is the Ser-102. Ser-102, Asp-241, Asp-243, and Asp-245 together coordinate Mg(2+). Position 102 is a phosphoserine (Ser-102).

It belongs to the phosphohexose mutase family. Mg(2+) serves as cofactor. In terms of processing, activated by phosphorylation.

The catalysed reaction is alpha-D-glucosamine 1-phosphate = D-glucosamine 6-phosphate. In terms of biological role, catalyzes the conversion of glucosamine-6-phosphate to glucosamine-1-phosphate. This chain is Phosphoglucosamine mutase, found in Histophilus somni (strain 129Pt) (Haemophilus somnus).